A 325-amino-acid chain; its full sequence is Aquaporin-8 (325 aa).

Residues 1–10 (MALRSPARDY) are Cytoplasmic-facing. Residues 11–31 (LVSMIGELVGTFLFLFFAFAA) traverse the membrane as a helical segment. At 32 to 52 (AQTANQPNGTKPLTPNATDTS) the chain is on the extracellular side. N-linked (GlcNAc...) asparagine glycosylation is found at Asn-39 and Asn-47. A helical membrane pass occupies residues 53-73 (KLLYIALAFGASLAANVWVFF). Residues 74–100 (RVSGGQFNPAVTLALVLIRAVSPTKAL) lie on the Cytoplasmic side of the membrane. The NPA 1 signature appears at 81-83 (NPA). Residues 101-121 (ILIPAQLVGGSLAAAAVKGII) traverse the membrane as a helical segment. The Extracellular segment spans residues 122 to 140 (PGDDILFAVSLGPGVANVQ). A helical membrane pass occupies residues 141-161 (GLFIELLLTFMLVFTILMLVA). The Cytoplasmic portion of the chain corresponds to 162–167 (EKTKST). Residues 168 to 188 (FVAPIGIGFSLFIGHLVGIFW) traverse the membrane as a helical segment. Residues 189–212 (TGAGINPARAFSPALIQASFPSYH) lie on the Extracellular side of the membrane. The NPA 2 signature appears at 194–196 (NPA). Residues 213–233 (WIYWLGPALGSFLAAGLYLGL) traverse the membrane as a helical segment. Over 234–325 (KEMKYELVGG…GSPDSTDLPT (92 aa)) the chain is Cytoplasmic. Disordered stretches follow at residues 279-298 (LGQF…LERG) and 305-325 (EDDP…DLPT). The span at 286–298 (TEGHRSPVDLERG) shows a compositional bias: basic and acidic residues.

This sequence belongs to the MIP/aquaporin (TC 1.A.8) family.

The protein localises to the cell membrane. The enzyme catalyses H2O2(out) = H2O2(in). It catalyses the reaction H2O(in) = H2O(out). In terms of biological role, plasma membrane water channel that regulates the reactive oxygen species (ROS)-signaling pathway through its capacity to act as a membrane channel for hydrogen peroxide uptake. Required for the formation of infection structures and infection, especially on host leaves where it is essential for the penetration into the host. Regulates the expression of proteins related to redox-regulation and intracellular signal transduction and plays a role in the distribution of mitochondria in the hyphae. The chain is Aquaporin-8 from Botryotinia fuckeliana (strain B05.10) (Noble rot fungus).